The chain runs to 219 residues: Ribose-5-phosphate isomerase A (219 aa).

Substrate-binding positions include 28–31 (TGST), 81–84 (DGAD), and 94–97 (KGGG). The active-site Proton acceptor is the Glu-103. Lys-121 provides a ligand contact to substrate.

The protein belongs to the ribose 5-phosphate isomerase family. As to quaternary structure, homodimer.

The enzyme catalyses aldehydo-D-ribose 5-phosphate = D-ribulose 5-phosphate. It functions in the pathway carbohydrate degradation; pentose phosphate pathway; D-ribose 5-phosphate from D-ribulose 5-phosphate (non-oxidative stage): step 1/1. Catalyzes the reversible conversion of ribose-5-phosphate to ribulose 5-phosphate. The sequence is that of Ribose-5-phosphate isomerase A from Enterobacter cloacae.